We begin with the raw amino-acid sequence, 341 residues long: Hypophosphite import ATP-binding protein HtxD (341 aa).

Positions 6–249 constitute an ABC transporter domain; it reads LQLKNVGKSY…RVHALYQVPA (244 aa). 38–45 contributes to the ATP binding site; it reads GTSGAGKS. Positions 278 to 341 are disordered; that stretch reads IHTPHTRAAP…TGRGQDRGPG (64 aa). Composition is skewed to basic and acidic residues over residues 307–320 and 327–341; these read ADRRHGAVVRDRTT and GGHDGTGRGQDRGPG.

This sequence belongs to the ABC transporter superfamily. Phosphonates importer (TC 3.A.1.9.1) family. In terms of assembly, the complex is composed of two ATP-binding proteins (HtxD), two transmembrane proteins (HtxC and HtxE) and a solute-binding protein (HtxB).

The protein resides in the cell inner membrane. It catalyses the reaction phosphinate(out) + ATP + H2O = phosphinate(in) + ADP + phosphate + H(+). Part of the ABC transporter complex HtxBCDE involved in hypophosphite import. Responsible for energy coupling to the transport system. This chain is Hypophosphite import ATP-binding protein HtxD (htxD), found in Stutzerimonas stutzeri (Pseudomonas stutzeri).